A 295-amino-acid chain; its full sequence is GTPase Era (295 aa).

One can recognise an Era-type G domain in the interval 3-171; sequence KSGFITVIGR…LELMKKYLPE (169 aa). The segment at 11–18 is G1; it reads GRPNVGKS. 11–18 serves as a coordination point for GTP; sequence GRPNVGKS. The tract at residues 37 to 41 is G2; the sequence is QTTRN. The segment at 58 to 61 is G3; it reads DTPG. GTP is bound by residues 58–62 and 120–123; these read DTPGM and NKID. The G4 stretch occupies residues 120–123; the sequence is NKID. Residues 150 to 152 are G5; that stretch reads ISA. The region spanning 202–279 is the KH type-2 domain; that stretch reads LSEEVPHGIA…SLKVWVKVKK (78 aa).

It belongs to the TRAFAC class TrmE-Era-EngA-EngB-Septin-like GTPase superfamily. Era GTPase family. Monomer.

The protein resides in the cytoplasm. It is found in the cell membrane. Functionally, an essential GTPase that binds both GDP and GTP, with rapid nucleotide exchange. Plays a role in 16S rRNA processing and 30S ribosomal subunit biogenesis and possibly also in cell cycle regulation and energy metabolism. The chain is GTPase Era from Clostridium tetani (strain Massachusetts / E88).